Consider the following 95-residue polypeptide: Toxin Tbo-IT2 (95 aa).

An N-terminal signal peptide occupies residues 1 to 23 (MTMKTLCLSLIVIGVLILVAVKA). Residues 24-53 (EDYVNINSLEEAPEENVNINNLEETPEESR) constitute a propeptide that is removed on maturation. 5 disulfides stabilise this stretch: Cys-54/Cys-68, Cys-61/Cys-73, Cys-67/Cys-84, Cys-70/Cys-92, and Cys-75/Cys-82. Cys-92 is modified (cysteine amide).

Belongs to the neurotoxin 02 (plectoxin) family. 02 (plectoxin) subfamily. In terms of tissue distribution, expressed by the venom gland.

The protein resides in the secreted. Its function is as follows. This recombinant (non-amidated) toxin shows insecticidal activity on larvae of the housefly Musca domestica and has no activity on a panel of expressed neuronal receptors and ion channels. In Tibellus oblongus (Oblong running crab spider), this protein is Toxin Tbo-IT2.